Here is a 292-residue protein sequence, read N- to C-terminus: MRMGIISEERDWVTDELKSKMEKNDIDPVIIQPSKIISYIESEVKFEQNNRSILDLKCAFVRNIGEGVEMFHRFDMLKYLENYVPIINPMDGIENAGNKFRTSFLMEVHKIPHPKTIVAEDVNKALIAADKFEDVVLKPLFGNQGKGLVRVKGRSTVAKLKALNTFKSTHGVIYMQEFVNNPNNVYRDIRAFVVGDKVISAMYRTSDNWITNIHQNGVPEKCEITEELSKIVLAAKDAVGLVYAGVDILESSDGLKVIEVNACPSWEGLSRISEVDIAQNLIDEALNYAKEY.

The ATP-grasp domain occupies 103 to 286 (SFLMEVHKIP…IAQNLIDEAL (184 aa)). ATP-binding positions include Lys-138, 176–188 (QEFV…VYRD), and Arg-204. Asp-247, Glu-259, and Asn-261 together coordinate Mg(2+). Residues Asp-247, Glu-259, and Asn-261 each contribute to the Mn(2+) site.

It belongs to the RimK family. MptN subfamily. As to quaternary structure, homodimer. The cofactor is Mg(2+). Mn(2+) serves as cofactor.

It carries out the reaction 5,6,7,8-tetrahydromethanopterin + L-glutamate + ATP = 5,6,7,8-tetrahydrosarcinapterin + ADP + phosphate + H(+). It participates in cofactor biosynthesis; 5,6,7,8-tetrahydrosarcinapterin biosynthesis. Catalyzes the ATP or GTP-dependent addition of one L-glutamate molecule to tetrahydromethanopterin, producing tetrahydrosarcinapterin. This chain is Tetrahydromethanopterin:alpha-L-glutamate ligase (mptN), found in Methanococcus maripaludis (strain DSM 14266 / JCM 13030 / NBRC 101832 / S2 / LL).